The chain runs to 370 residues: Tyrosyl-DNA phosphodiesterase 2 (370 aa).

Met1 carries the post-translational modification N-acetylmethionine. The interval 1 to 32 (MASGSSSDAAEPAGPAGRAASAPEAAQAEEDR) is disordered. Residues 9–26 (AAEPAGPAGRAASAPEAA) are compositionally biased toward low complexity. Lys34 participates in a covalent cross-link: Glycyl lysine isopeptide (Lys-Gly) (interchain with G-Cter in SUMO2). The residue at position 99 (Thr99) is a Phosphothreonine; by ACVR1B. The interval 130–134 (NIDGL) is interaction with 5' end of substrate DNA. Residues Asp132 and Glu162 each coordinate Mg(2+). The interval 236–241 (HLESTR) is interaction with 5' end of substrate DNA. Asp272 (proton donor/acceptor) is an active-site residue. Interaction with 5' end of substrate DNA regions lie at residues 274–276 (NLR) and 315–321 (LRIPAAY).

The protein belongs to the CCR4/nocturin family. In terms of assembly, interacts with TRAF2, TRAF3, TRAF5, TRAF6, TNFRSF8/CD30, TNFRSF5/CD40, TNFRSF1B/TNF-R75, ETS1, ETS2, FLI1, SMAD3 and ACVR1B/ALK4. Mg(2+) is required as a cofactor. Mn(2+) serves as cofactor. In terms of processing, ubiquitinated by TRAF6. Widely expressed. Expressed in whole brain, cerebellum, quiescent cortical astrocytes and cerebellar granule neurons.

The protein resides in the nucleus. It is found in the PML body. The protein localises to the nucleolus. It localises to the cytoplasm. Its function is as follows. DNA repair enzyme that can remove a variety of covalent adducts from DNA through hydrolysis of a 5'-phosphodiester bond, giving rise to DNA with a free 5' phosphate. Catalyzes the hydrolysis of dead-end complexes between DNA and the topoisomerase 2 (TOP2) active site tyrosine residue. The 5'-tyrosyl DNA phosphodiesterase activity can enable the repair of TOP2-induced DNA double-strand breaks/DSBs without the need for nuclease activity, creating a 'clean' DSB with 5'-phosphate termini that are ready for ligation. Thereby, protects the transcription of many genes involved in neurological development and maintenance from the abortive activity of TOP2. Hydrolyzes 5'-phosphoglycolates on protruding 5' ends on DSBs due to DNA damage by radiation and free radicals. Has preference for single-stranded DNA or duplex DNA with a 4 base pair overhang as substrate. Also has 3'-tyrosyl DNA phosphodiesterase activity, but less efficiently and much slower than TDP1. Constitutes the major if not only 5'-tyrosyl-DNA phosphodiesterase in cells. Also acts as an adapter by participating in the specific activation of MAP3K7/TAK1 in response to TGF-beta: associates with components of the TGF-beta receptor-TRAF6-TAK1 signaling module and promotes their ubiquitination dependent complex formation. Involved in non-canonical TGF-beta induced signaling routes. May also act as a negative regulator of ETS1 and may inhibit NF-kappa-B activation. Acts as a regulator of ribosome biogenesis following stress. The sequence is that of Tyrosyl-DNA phosphodiesterase 2 (Tdp2) from Mus musculus (Mouse).